We begin with the raw amino-acid sequence, 331 residues long: Ferredoxin--NADP reductase 2 (331 aa).

FAD-binding residues include Glu37, Gln45, Tyr50, Val90, Phe124, Asp285, and Thr326.

This sequence belongs to the ferredoxin--NADP reductase type 2 family. Homodimer. FAD serves as cofactor.

It carries out the reaction 2 reduced [2Fe-2S]-[ferredoxin] + NADP(+) + H(+) = 2 oxidized [2Fe-2S]-[ferredoxin] + NADPH. In Bacillus velezensis (strain DSM 23117 / BGSC 10A6 / LMG 26770 / FZB42) (Bacillus amyloliquefaciens subsp. plantarum), this protein is Ferredoxin--NADP reductase 2.